Here is a 240-residue protein sequence, read N- to C-terminus: UDP-2,3-diacylglucosamine hydrolase (240 aa).

Mn(2+) is bound by residues Asp-8, His-10, Asp-41, Asn-79, and His-114. 79-80 (NR) is a binding site for substrate. Substrate contacts are provided by Asp-122, Ser-160, Asn-164, Lys-167, and His-195. Residues His-195 and His-197 each coordinate Mn(2+).

It belongs to the LpxH family. The cofactor is Mn(2+).

The protein resides in the cell inner membrane. The enzyme catalyses UDP-2-N,3-O-bis[(3R)-3-hydroxytetradecanoyl]-alpha-D-glucosamine + H2O = 2-N,3-O-bis[(3R)-3-hydroxytetradecanoyl]-alpha-D-glucosaminyl 1-phosphate + UMP + 2 H(+). The protein operates within glycolipid biosynthesis; lipid IV(A) biosynthesis; lipid IV(A) from (3R)-3-hydroxytetradecanoyl-[acyl-carrier-protein] and UDP-N-acetyl-alpha-D-glucosamine: step 4/6. Its function is as follows. Hydrolyzes the pyrophosphate bond of UDP-2,3-diacylglucosamine to yield 2,3-diacylglucosamine 1-phosphate (lipid X) and UMP by catalyzing the attack of water at the alpha-P atom. Involved in the biosynthesis of lipid A, a phosphorylated glycolipid that anchors the lipopolysaccharide to the outer membrane of the cell. This is UDP-2,3-diacylglucosamine hydrolase from Serratia proteamaculans (strain 568).